Here is a 164-residue protein sequence, read N- to C-terminus: SsrA-binding protein (164 aa).

This sequence belongs to the SmpB family.

It localises to the cytoplasm. Its function is as follows. Required for rescue of stalled ribosomes mediated by trans-translation. Binds to transfer-messenger RNA (tmRNA), required for stable association of tmRNA with ribosomes. tmRNA and SmpB together mimic tRNA shape, replacing the anticodon stem-loop with SmpB. tmRNA is encoded by the ssrA gene; the 2 termini fold to resemble tRNA(Ala) and it encodes a 'tag peptide', a short internal open reading frame. During trans-translation Ala-aminoacylated tmRNA acts like a tRNA, entering the A-site of stalled ribosomes, displacing the stalled mRNA. The ribosome then switches to translate the ORF on the tmRNA; the nascent peptide is terminated with the 'tag peptide' encoded by the tmRNA and targeted for degradation. The ribosome is freed to recommence translation, which seems to be the essential function of trans-translation. The protein is SsrA-binding protein of Corynebacterium glutamicum (strain R).